A 97-amino-acid chain; its full sequence is Citrate lyase acyl carrier protein (97 aa).

S14 bears the O-(phosphoribosyl dephospho-coenzyme A)serine mark.

Belongs to the CitD family. Oligomer with a subunit composition of (alpha,beta,gamma)6.

It is found in the cytoplasm. In terms of biological role, covalent carrier of the coenzyme of citrate lyase. The sequence is that of Citrate lyase acyl carrier protein from Oenococcus oeni (strain ATCC BAA-331 / PSU-1).